An 83-amino-acid polypeptide reads, in one-letter code: Small ribosomal subunit protein bS16 (83 aa).

This sequence belongs to the bacterial ribosomal protein bS16 family.

The polypeptide is Small ribosomal subunit protein bS16 (Thermosynechococcus vestitus (strain NIES-2133 / IAM M-273 / BP-1)).